We begin with the raw amino-acid sequence, 330 residues long: DNA-directed RNA polymerase subunit alpha (330 aa).

An alpha N-terminal domain (alpha-NTD) region spans residues 1–231 (MQTNLLKPKT…EQLAVFAQLE (231 aa)). An alpha C-terminal domain (alpha-CTD) region spans residues 250–330 (FDPILLRPVD…SWPPAGLDKR (81 aa)).

Belongs to the RNA polymerase alpha chain family. As to quaternary structure, homodimer. The RNAP catalytic core consists of 2 alpha, 1 beta, 1 beta' and 1 omega subunit. When a sigma factor is associated with the core the holoenzyme is formed, which can initiate transcription.

The catalysed reaction is RNA(n) + a ribonucleoside 5'-triphosphate = RNA(n+1) + diphosphate. Its function is as follows. DNA-dependent RNA polymerase catalyzes the transcription of DNA into RNA using the four ribonucleoside triphosphates as substrates. This chain is DNA-directed RNA polymerase subunit alpha, found in Polaromonas naphthalenivorans (strain CJ2).